The following is a 138-amino-acid chain: Basic phospholipase A2 homolog bothropstoxin-II (138 aa).

A signal peptide spans 1–16 (MRTLWIMAVLLVGVEG). 7 disulfide bridges follow: Cys42–Cys131, Cys44–Cys60, Cys59–Cys111, Cys65–Cys138, Cys66–Cys104, Cys73–Cys97, and Cys91–Cys102. The important for membrane-damaging activities in eukaryotes and bacteria; heparin-binding stretch occupies residues 121-133 (KRYMAYPDVLCKK).

This sequence belongs to the phospholipase A2 family. Group II subfamily. D49 sub-subfamily. As to quaternary structure, homodimer; non-covalently linked (probable alternative/compact dimer conformation). As to expression, expressed by the venom gland.

The protein resides in the secreted. Snake venom phospholipase A2 (PLA2) that shows low enzymatic activity even tough it conserves the catalytic residues. Shows a strong myotoxic activity and induces indirect hemolysis, anticoagulant properties, and cytotoxic activities. In vivo, it induces muscle necrosis, accompanied by polymorphonuclear cell infiltration, and edema in the mouse paw. It exerts its function even in the absence of extracellular calcium, indicating it is not a calcium-dependent enzyme. A model of myotoxic mechanism has been proposed: an apo Lys49-PLA2 is activated by the entrance of a hydrophobic molecule (e.g. fatty acid) at the hydrophobic channel of the protein leading to a reorientation of a monomer. This reorientation causes a transition between 'inactive' to 'active' states, causing alignment of C-terminal and membrane-docking sites (MDoS) side-by-side and putting the membrane-disruption sites (MDiS) in the same plane, exposed to solvent and in a symmetric position for both monomers. The MDoS region stabilizes the toxin on membrane by the interaction of charged residues with phospholipid head groups. Subsequently, the MDiS region destabilizes the membrane with penetration of hydrophobic residues. This insertion causes a disorganization of the membrane, allowing an uncontrolled influx of ions (i.e. calcium and sodium), and eventually triggering irreversible intracellular alterations and cell death. The polypeptide is Basic phospholipase A2 homolog bothropstoxin-II (Bothrops jararacussu (Jararacussu)).